The chain runs to 436 residues: Histidine--tRNA ligase 1 (436 aa).

It belongs to the class-II aminoacyl-tRNA synthetase family. Homodimer.

The protein resides in the cytoplasm. It carries out the reaction tRNA(His) + L-histidine + ATP = L-histidyl-tRNA(His) + AMP + diphosphate + H(+). This is Histidine--tRNA ligase 1 from Bacillus cereus (strain ATCC 10987 / NRS 248).